The primary structure comprises 255 residues: Imidazole glycerol phosphate synthase subunit HisF (255 aa).

Active-site residues include Asp-11 and Asp-130.

It belongs to the HisA/HisF family. As to quaternary structure, heterodimer of HisH and HisF.

The protein resides in the cytoplasm. The enzyme catalyses 5-[(5-phospho-1-deoxy-D-ribulos-1-ylimino)methylamino]-1-(5-phospho-beta-D-ribosyl)imidazole-4-carboxamide + L-glutamine = D-erythro-1-(imidazol-4-yl)glycerol 3-phosphate + 5-amino-1-(5-phospho-beta-D-ribosyl)imidazole-4-carboxamide + L-glutamate + H(+). It participates in amino-acid biosynthesis; L-histidine biosynthesis; L-histidine from 5-phospho-alpha-D-ribose 1-diphosphate: step 5/9. In terms of biological role, IGPS catalyzes the conversion of PRFAR and glutamine to IGP, AICAR and glutamate. The HisF subunit catalyzes the cyclization activity that produces IGP and AICAR from PRFAR using the ammonia provided by the HisH subunit. The sequence is that of Imidazole glycerol phosphate synthase subunit HisF from Akkermansia muciniphila (strain ATCC BAA-835 / DSM 22959 / JCM 33894 / BCRC 81048 / CCUG 64013 / CIP 107961 / Muc).